Reading from the N-terminus, the 203-residue chain is Probable Tat proofreading chaperone DmsD (203 aa).

It belongs to the TorD/DmsD family. DmsD subfamily.

Its function is as follows. Required for biogenesis/assembly of DMSO reductase, but not for the interaction of the DmsA signal peptide with the Tat system. May be part of a chaperone cascade complex that facilitates a folding-maturation pathway for the substrate protein. The chain is Probable Tat proofreading chaperone DmsD from Haemophilus influenzae (strain ATCC 51907 / DSM 11121 / KW20 / Rd).